A 339-amino-acid chain; its full sequence is MDQLATQIDGKPASIPAVETSSSLEEAKIIYNLPFNDLLFRAQQVHRCHFDANAIQMSRLLSIKTGGCPEDCSYCSQSARNPTGLKASKLMEVERVLAEARKAKEGGATRYCMGAAWRNPKERDMEAVVAMVEGVKALDMETCMTLGMLTPEQSERLADAGLDYYNHNVDTSERFYSEIITTRTFEDRLETLANVRDAGIKVCAGGILGMGETVEDRISMLVTLANLPVPPESVPINMLIPIPGSKLANADPVDPIDFVRTIALARILMPRSHVRLSAGRTEMSDETQALCFLAGANSIFIGETLLTADNPGEDHDTALFRRLGLKPMELQSSEAGGCR.

Residues 53-271 (NAIQMSRLLS…IALARILMPR (219 aa)) form the Radical SAM core domain. [4Fe-4S] cluster is bound by residues Cys68, Cys72, and Cys75. [2Fe-2S] cluster contacts are provided by Cys112, Cys143, Cys203, and Arg275.

Belongs to the radical SAM superfamily. Biotin synthase family. In terms of assembly, homodimer. [4Fe-4S] cluster serves as cofactor. It depends on [2Fe-2S] cluster as a cofactor.

The enzyme catalyses (4R,5S)-dethiobiotin + (sulfur carrier)-SH + 2 reduced [2Fe-2S]-[ferredoxin] + 2 S-adenosyl-L-methionine = (sulfur carrier)-H + biotin + 2 5'-deoxyadenosine + 2 L-methionine + 2 oxidized [2Fe-2S]-[ferredoxin]. It functions in the pathway cofactor biosynthesis; biotin biosynthesis; biotin from 7,8-diaminononanoate: step 2/2. Its function is as follows. Catalyzes the conversion of dethiobiotin (DTB) to biotin by the insertion of a sulfur atom into dethiobiotin via a radical-based mechanism. This is Biotin synthase from Agrobacterium fabrum (strain C58 / ATCC 33970) (Agrobacterium tumefaciens (strain C58)).